The sequence spans 182 residues: Segregation and condensation protein B (182 aa).

This sequence belongs to the ScpB family. In terms of assembly, homodimer. Homodimerization may be required to stabilize the binding of ScpA to the Smc head domains. Component of a cohesin-like complex composed of ScpA, ScpB and the Smc homodimer, in which ScpA and ScpB bind to the head domain of Smc. The presence of the three proteins is required for the association of the complex with DNA.

It localises to the cytoplasm. Its function is as follows. Participates in chromosomal partition during cell division. May act via the formation of a condensin-like complex containing Smc and ScpA that pull DNA away from mid-cell into both cell halves. This chain is Segregation and condensation protein B, found in Staphylococcus saprophyticus subsp. saprophyticus (strain ATCC 15305 / DSM 20229 / NCIMB 8711 / NCTC 7292 / S-41).